Here is a 233-residue protein sequence, read N- to C-terminus: Translation initiation factor 6 (233 aa).

The protein belongs to the eIF-6 family.

Binds to the 50S ribosomal subunit and prevents its association with the 30S ribosomal subunit to form the 70S initiation complex. This Aeropyrum pernix (strain ATCC 700893 / DSM 11879 / JCM 9820 / NBRC 100138 / K1) protein is Translation initiation factor 6.